We begin with the raw amino-acid sequence, 187 residues long: MKTMCYFRNHFLIAMPALDDVNFARTVTFICEHNQDGAMGIIINRPLSITLDQMLQHIKVKDCPQEVGEMPVFLGGPIQQERGFVLHRPIGQWETTLRVGDEVGITTSRDILDAITQGKGPPQTLIALGYAGWGPNQLEQELAENAWLSTPANSTVVFDTPYQQRWEAAAALAGVDLSRLSGEIGHA.

The protein belongs to the UPF0301 (AlgH) family.

The polypeptide is UPF0301 protein Noc_0368 (Nitrosococcus oceani (strain ATCC 19707 / BCRC 17464 / JCM 30415 / NCIMB 11848 / C-107)).